A 122-amino-acid polypeptide reads, in one-letter code: Large ribosomal subunit protein uL14 (122 aa).

The protein belongs to the universal ribosomal protein uL14 family. As to quaternary structure, part of the 50S ribosomal subunit. Forms a cluster with proteins L3 and L19. In the 70S ribosome, L14 and L19 interact and together make contacts with the 16S rRNA in bridges B5 and B8.

Functionally, binds to 23S rRNA. Forms part of two intersubunit bridges in the 70S ribosome. The sequence is that of Large ribosomal subunit protein uL14 from Chloroherpeton thalassium (strain ATCC 35110 / GB-78).